A 707-amino-acid polypeptide reads, in one-letter code: DNA ligase (707 aa).

Residues 36–40 (DADFD), 85–86 (SL), and Glu116 each bind NAD(+). The N6-AMP-lysine intermediate role is filled by Lys118. The NAD(+) site is built by Arg139, Glu180, Lys298, and Lys322. The Zn(2+) site is built by Cys416, Cys419, Cys434, and Cys440. The BRCT domain maps to 613–707 (AASSKIAGRS…STHVDPERMV (95 aa)).

It belongs to the NAD-dependent DNA ligase family. LigA subfamily. It depends on Mg(2+) as a cofactor. Mn(2+) serves as cofactor.

It carries out the reaction NAD(+) + (deoxyribonucleotide)n-3'-hydroxyl + 5'-phospho-(deoxyribonucleotide)m = (deoxyribonucleotide)n+m + AMP + beta-nicotinamide D-nucleotide.. Its function is as follows. DNA ligase that catalyzes the formation of phosphodiester linkages between 5'-phosphoryl and 3'-hydroxyl groups in double-stranded DNA using NAD as a coenzyme and as the energy source for the reaction. It is essential for DNA replication and repair of damaged DNA. The sequence is that of DNA ligase from Nitrosospira multiformis (strain ATCC 25196 / NCIMB 11849 / C 71).